The chain runs to 358 residues: UDP-N-acetylglucosamine--N-acetylmuramyl-(pentapeptide) pyrophosphoryl-undecaprenol N-acetylglucosamine transferase (358 aa).

UDP-N-acetyl-alpha-D-glucosamine-binding positions include 13–15 (TAG), arginine 166, serine 196, and glutamine 291.

It belongs to the glycosyltransferase 28 family. MurG subfamily.

The protein localises to the cell membrane. The catalysed reaction is di-trans,octa-cis-undecaprenyl diphospho-N-acetyl-alpha-D-muramoyl-L-alanyl-D-glutamyl-meso-2,6-diaminopimeloyl-D-alanyl-D-alanine + UDP-N-acetyl-alpha-D-glucosamine = di-trans,octa-cis-undecaprenyl diphospho-[N-acetyl-alpha-D-glucosaminyl-(1-&gt;4)]-N-acetyl-alpha-D-muramoyl-L-alanyl-D-glutamyl-meso-2,6-diaminopimeloyl-D-alanyl-D-alanine + UDP + H(+). The protein operates within cell wall biogenesis; peptidoglycan biosynthesis. Its function is as follows. Cell wall formation. Catalyzes the transfer of a GlcNAc subunit on undecaprenyl-pyrophosphoryl-MurNAc-pentapeptide (lipid intermediate I) to form undecaprenyl-pyrophosphoryl-MurNAc-(pentapeptide)GlcNAc (lipid intermediate II). This chain is UDP-N-acetylglucosamine--N-acetylmuramyl-(pentapeptide) pyrophosphoryl-undecaprenol N-acetylglucosamine transferase, found in Clostridium botulinum (strain Alaska E43 / Type E3).